A 131-amino-acid chain; its full sequence is Small ribosomal subunit protein bS6 (131 aa).

The protein belongs to the bacterial ribosomal protein bS6 family.

Binds together with bS18 to 16S ribosomal RNA. This chain is Small ribosomal subunit protein bS6, found in Borrelia hermsii (strain HS1 / DAH).